A 126-amino-acid polypeptide reads, in one-letter code: Holo-[acyl-carrier-protein] synthase (126 aa).

The Mg(2+) site is built by D9 and E58.

The protein belongs to the P-Pant transferase superfamily. AcpS family. Requires Mg(2+) as cofactor.

It is found in the cytoplasm. The catalysed reaction is apo-[ACP] + CoA = holo-[ACP] + adenosine 3',5'-bisphosphate + H(+). Functionally, transfers the 4'-phosphopantetheine moiety from coenzyme A to a Ser of acyl-carrier-protein. The sequence is that of Holo-[acyl-carrier-protein] synthase from Buchnera aphidicola subsp. Acyrthosiphon pisum (strain APS) (Acyrthosiphon pisum symbiotic bacterium).